The sequence spans 408 residues: Broad specificity amino-acid racemase (408 aa).

An N-terminal signal peptide occupies residues 1–24 (MNFKKTLLSIAIASASLTPAFSYS). A disulfide bridge connects residues cysteine 71 and cysteine 97. Catalysis depends on lysine 75, which acts as the Proton acceptor. Position 75 is an N6-(pyridoxal phosphate)lysine (lysine 75). Position 174 (arginine 174) interacts with substrate. Tyrosine 300 acts as the Proton acceptor in catalysis. Methionine 348 lines the substrate pocket.

Belongs to the alanine racemase family. Bsr subfamily. It depends on pyridoxal 5'-phosphate as a cofactor.

It is found in the periplasm. The enzyme catalyses an L-alpha-amino acid = a D-alpha-amino acid. The catalysed reaction is L-lysine = D-lysine. It carries out the reaction L-arginine = D-arginine. Amino-acid racemase able to utilize a broad range of substrates. The protein is Broad specificity amino-acid racemase (alr) of Vibrio vulnificus (strain CMCP6).